The chain runs to 138 residues: Cytosolic calcium-binding protein 2 (138 aa).

The span at 31-41 (TEVTQQPEESV) shows a compositional bias: low complexity. A disordered region spans residues 31-122 (TEVTQQPEES…KKTEVVEEKQ (92 aa)). 6 consecutive repeat copies span residues 62 to 68 (VEEAEKK), 71 to 75 (ETEKK), 92 to 98 (VEEEEKK), 109 to 114 (VEEEKK), 118 to 122 (VEEKQ), and 131 to 135 (VAVEK). A 6 X 5 AA approximate repeats of V-E-E-K-K region spans residues 62–135 (VEEAEKKDEE…AAAEEVAVEK (74 aa)). Residues 64–85 (EAEKKDEETEKKTEEKDEKTEV) show a composition bias toward basic and acidic residues. Positions 110–122 (EEEKKTEVVEEKQ) are enriched in basic and acidic residues.

As to expression, predominantly expressed in roots (e.g. in endodermis in the stele) and stems, to a lower extent in shoots, flowers and siliques, and, at low levels, in leaves.

It is found in the cytoplasm. Its subcellular location is the cytosol. Binds calcium Ca(2+) and may act as a signal mediator to buffer Ca(2+). The sequence is that of Cytosolic calcium-binding protein 2 from Arabidopsis thaliana (Mouse-ear cress).